We begin with the raw amino-acid sequence, 253 residues long: Ubiquinone/menaquinone biosynthesis C-methyltransferase UbiE (253 aa).

Residues T76, D97, and 125–126 (NA) contribute to the S-adenosyl-L-methionine site.

It belongs to the class I-like SAM-binding methyltransferase superfamily. MenG/UbiE family.

It carries out the reaction a 2-demethylmenaquinol + S-adenosyl-L-methionine = a menaquinol + S-adenosyl-L-homocysteine + H(+). The catalysed reaction is a 2-methoxy-6-(all-trans-polyprenyl)benzene-1,4-diol + S-adenosyl-L-methionine = a 5-methoxy-2-methyl-3-(all-trans-polyprenyl)benzene-1,4-diol + S-adenosyl-L-homocysteine + H(+). It functions in the pathway quinol/quinone metabolism; menaquinone biosynthesis; menaquinol from 1,4-dihydroxy-2-naphthoate: step 2/2. It participates in cofactor biosynthesis; ubiquinone biosynthesis. Functionally, methyltransferase required for the conversion of demethylmenaquinol (DMKH2) to menaquinol (MKH2) and the conversion of 2-polyprenyl-6-methoxy-1,4-benzoquinol (DDMQH2) to 2-polyprenyl-3-methyl-6-methoxy-1,4-benzoquinol (DMQH2). In Stenotrophomonas maltophilia (strain K279a), this protein is Ubiquinone/menaquinone biosynthesis C-methyltransferase UbiE.